The sequence spans 275 residues: 3-methyl-2-oxobutanoate hydroxymethyltransferase (275 aa).

2 residues coordinate Mg(2+): Asp-51 and Asp-90. 3-methyl-2-oxobutanoate contacts are provided by residues 51–52, Asp-90, and Lys-120; that span reads DS. Mg(2+) is bound at residue Glu-122. The active-site Proton acceptor is Glu-189.

The protein belongs to the PanB family. In terms of assembly, homodecamer; pentamer of dimers. It depends on Mg(2+) as a cofactor.

The protein resides in the cytoplasm. The catalysed reaction is 3-methyl-2-oxobutanoate + (6R)-5,10-methylene-5,6,7,8-tetrahydrofolate + H2O = 2-dehydropantoate + (6S)-5,6,7,8-tetrahydrofolate. It participates in cofactor biosynthesis; (R)-pantothenate biosynthesis; (R)-pantoate from 3-methyl-2-oxobutanoate: step 1/2. Its function is as follows. Catalyzes the reversible reaction in which hydroxymethyl group from 5,10-methylenetetrahydrofolate is transferred onto alpha-ketoisovalerate to form ketopantoate. The sequence is that of 3-methyl-2-oxobutanoate hydroxymethyltransferase from Caulobacter vibrioides (strain ATCC 19089 / CIP 103742 / CB 15) (Caulobacter crescentus).